Reading from the N-terminus, the 314-residue chain is Olfactory receptor 5F1 (314 aa).

At Met1–Ile25 the chain is on the extracellular side. A glycan (N-linked (GlcNAc...) asparagine) is linked at Asn5. Residues Ile26 to Ile46 form a helical membrane-spanning segment. The Cytoplasmic portion of the chain corresponds to Leu47–Gln54. Residues Leu55 to Thr75 traverse the membrane as a helical segment. Residues Thr76–Leu99 are Extracellular-facing. A disulfide bridge links Cys97 with Cys189. A helical transmembrane segment spans residues Gln100–Tyr120. Over Asp121–Thr139 the chain is Cytoplasmic. A helical membrane pass occupies residues Val140–Thr160. Topologically, residues Ser161 to Glu196 are extracellular. A helical membrane pass occupies residues Ser197 to Ser217. Over Tyr218–Ala237 the chain is Cytoplasmic. The helical transmembrane segment at Phe238–Thr258 threads the bilayer. Topologically, residues Tyr259–Asp271 are extracellular. Residues Lys272 to Leu292 traverse the membrane as a helical segment. The Cytoplasmic segment spans residues Arg293–Leu314.

This sequence belongs to the G-protein coupled receptor 1 family.

The protein resides in the cell membrane. Odorant receptor. The polypeptide is Olfactory receptor 5F1 (OR5F1) (Homo sapiens (Human)).